A 143-amino-acid polypeptide reads, in one-letter code: Aspartate 1-decarboxylase (143 aa).

The Schiff-base intermediate with substrate; via pyruvic acid role is filled by serine 25. Serine 25 is subject to Pyruvic acid (Ser). Residue threonine 57 coordinates substrate. Residue tyrosine 58 is the Proton donor of the active site. 73–75 (GAA) serves as a coordination point for substrate.

Belongs to the PanD family. Heterooctamer of four alpha and four beta subunits. The cofactor is pyruvate. In terms of processing, is synthesized initially as an inactive proenzyme, which is activated by self-cleavage at a specific serine bond to produce a beta-subunit with a hydroxyl group at its C-terminus and an alpha-subunit with a pyruvoyl group at its N-terminus.

The protein localises to the cytoplasm. It carries out the reaction L-aspartate + H(+) = beta-alanine + CO2. It participates in cofactor biosynthesis; (R)-pantothenate biosynthesis; beta-alanine from L-aspartate: step 1/1. Catalyzes the pyruvoyl-dependent decarboxylation of aspartate to produce beta-alanine. The protein is Aspartate 1-decarboxylase of Mycolicibacterium paratuberculosis (strain ATCC BAA-968 / K-10) (Mycobacterium paratuberculosis).